The primary structure comprises 729 residues: Fatty acid oxidation complex subunit alpha (729 aa).

An enoyl-CoA hydratase/isomerase region spans residues 1-189 (MLYKGDTLYL…KIGLVDGVVK (189 aa)). D296 is a binding site for substrate. The segment at 311–729 (ETPKQAAVLG…ARPVGDLKTA (419 aa)) is 3-hydroxyacyl-CoA dehydrogenase. NAD(+) is bound by residues M324, D343, 400-402 (VVE), K407, and S429. H450 serves as the catalytic For 3-hydroxyacyl-CoA dehydrogenase activity. N453 contacts NAD(+). Substrate is bound by residues N500 and Y660. The disordered stretch occupies residues 708–729 (RHNEPYYPPVEPARPVGDLKTA).

It in the N-terminal section; belongs to the enoyl-CoA hydratase/isomerase family. This sequence in the C-terminal section; belongs to the 3-hydroxyacyl-CoA dehydrogenase family. As to quaternary structure, heterotetramer of two alpha chains (FadB) and two beta chains (FadA).

The enzyme catalyses a (3S)-3-hydroxyacyl-CoA + NAD(+) = a 3-oxoacyl-CoA + NADH + H(+). It catalyses the reaction a (3S)-3-hydroxyacyl-CoA = a (2E)-enoyl-CoA + H2O. It carries out the reaction a 4-saturated-(3S)-3-hydroxyacyl-CoA = a (3E)-enoyl-CoA + H2O. The catalysed reaction is (3S)-3-hydroxybutanoyl-CoA = (3R)-3-hydroxybutanoyl-CoA. The enzyme catalyses a (3Z)-enoyl-CoA = a 4-saturated (2E)-enoyl-CoA. It catalyses the reaction a (3E)-enoyl-CoA = a 4-saturated (2E)-enoyl-CoA. The protein operates within lipid metabolism; fatty acid beta-oxidation. Its function is as follows. Involved in the aerobic and anaerobic degradation of long-chain fatty acids via beta-oxidation cycle. Catalyzes the formation of 3-oxoacyl-CoA from enoyl-CoA via L-3-hydroxyacyl-CoA. It can also use D-3-hydroxyacyl-CoA and cis-3-enoyl-CoA as substrate. This chain is Fatty acid oxidation complex subunit alpha, found in Escherichia coli O6:H1 (strain CFT073 / ATCC 700928 / UPEC).